A 27-amino-acid polypeptide reads, in one-letter code: GGGKDYRVEIVDKHNXLRRSVXXTARN.

The protein belongs to the CRISP family. In terms of processing, contains 8 disulfide bonds. Expressed by the venom gland.

The protein resides in the secreted. Its function is as follows. Blocks contraction of smooth muscle elicited by high potassium-induced depolarization, but does not block caffeine-stimulated contraction. May target voltage-gated calcium channels on smooth muscle. The chain is Cysteine-rich venom protein tropirin from Tropidechis carinatus (Australian rough-scaled snake).